Consider the following 105-residue polypeptide: Urease subunit beta (105 aa).

The protein belongs to the urease beta subunit family. As to quaternary structure, heterotrimer of UreA (gamma), UreB (beta) and UreC (alpha) subunits. Three heterotrimers associate to form the active enzyme.

It is found in the cytoplasm. It catalyses the reaction urea + 2 H2O + H(+) = hydrogencarbonate + 2 NH4(+). It participates in nitrogen metabolism; urea degradation; CO(2) and NH(3) from urea (urease route): step 1/1. The protein is Urease subunit beta of Shewanella halifaxensis (strain HAW-EB4).